The primary structure comprises 373 residues: Dof zinc finger protein 3 (373 aa).

The segment at 1–23 (MASGGALSPVEEKPTVVKTTKAE) is disordered. Over residues 10–23 (VEEKPTVVKTTKAE) the composition is skewed to basic and acidic residues. Residues 45–99 (PCCPRCNSIKTKFCYYNNYSMAQPRYFCRECRRYWTQGGSLRNVPVGGGCRKSKR) form a Dof-type zinc finger. 4 residues coordinate Zn(2+): cysteine 47, cysteine 50, cysteine 72, and cysteine 75. A disordered region spans residues 297–327 (ALGGADEQQGGGDGGEAVMTKDTGGGASSSA).

In terms of assembly, interacts with RISBZ1/BZIP58.

It is found in the nucleus. Its function is as follows. Transcriptional activator that binds specifically to the DNA consensus core sequence 5'-AAAG-3' also known as prolamin box. Can activate the expression of genes encoding for the seed storage proteins glutelin, prolamin and globulin. Functions synergistically with RISBZ/BZIP58 to positively regulate quantitatively many seed storage proteins. Functions synergistically with RISBZ1/BZIP58 to positively regulate some metabolic enzymes, such as alanine aminotransferase and pyruvate phosphate dikinase, that are expressed in developing seeds. Functions synergistically with RISBZ1/BZIP58 to positively regulate genes that are key players in the development of aleurone layers. Functions synergistically with RISBZ1/BZIP58 to positively regulate the glutelin GLUD-1 gene in endosperm of developing seeds. Can activate the expression of the bifunctional lysine-degrading enzyme, lysine ketoglutarate reductase/saccharopine dehydrogenase (LKR/SDH), one of the key regulators determining free lysine content in plants. In germinating seeds, involved in the gibberellin-mediated activation of the alpha-amylase AMY1.1/AMY1A gene. This is Dof zinc finger protein 3 from Oryza sativa subsp. japonica (Rice).